The chain runs to 487 residues: E3 ubiquitin-protein ligase TRIM50 (487 aa).

The RING-type zinc finger occupies 16 to 57 (CPICLEVFKEPLMLQCGHSYCKGCLVSLSCHLDAELRCPVCR). The B box-type zinc-finger motif lies at 84 to 125 (PEPKVCVHHRNPLSLFCEKDQELICGLCGLLGSHQHHPVTPV). Residues Cys89, His92, Cys111, and His117 each contribute to the Zn(2+) site. Coiled-coil stretches lie at residues 125 to 169 (VSTV…NESD) and 204 to 235 (LVASLDMQLEQAQGTRERLAQAECVLEQFGNE). Residues 276–475 (DIKLTVWKRL…LPMVLPPPSG (200 aa)) form the B30.2/SPRY domain. N6-acetyllysine is present on Lys373. The disordered stretch occupies residues 468–487 (MVLPPPSGPGPLSPEQPTKL). The segment covering 469-481 (VLPPPSGPGPLSP) has biased composition (pro residues).

This sequence belongs to the TRIM/RBCC family. In terms of assembly, can form dimers and trimers. Interacts with several E2 ubiquitin-conjugating enzymes, including UBE2L6, UBE2E1, UBE2E3. No interaction with UBE2H. Interacts with BECN1. Interacts with SQSTM1. Interacts with NLRP3. In terms of processing, auto-ubiquitinated. Acetylated by EP300 and KAT2B. HDAC6 drives TRIM50 deacetylation. Acetylation antagonizes with TRIM50 ubiquitination.

Its subcellular location is the cytoplasm. It catalyses the reaction S-ubiquitinyl-[E2 ubiquitin-conjugating enzyme]-L-cysteine + [acceptor protein]-L-lysine = [E2 ubiquitin-conjugating enzyme]-L-cysteine + N(6)-ubiquitinyl-[acceptor protein]-L-lysine.. E3 ubiquitin-protein ligase that ubiquitinates Beclin-1/BECN1 in a 'Lys-63'-dependent manner enhancing its binding to ULK1. In turn, promotes starvation-induced autophagy activation. Also interacts with p62/SQSTM1 protein and thereby induces the formation and the autophagy clearance of aggresome-associated polyubiquitinated proteins through HDAC6 interaction. Also promotes NLRP3 inflammasome activation by directly inducing NLRP3 oligomerization independent of its E3 ligase function. The polypeptide is E3 ubiquitin-protein ligase TRIM50 (Homo sapiens (Human)).